We begin with the raw amino-acid sequence, 340 residues long: 4-amino-5-hydroxymethyl-2-methylpyrimidine phosphate synthase THI13 (340 aa).

The residue at position 62 (Lys62) is an N6-(pyridoxal phosphate)lysine. The active site involves His66. A pyridoxal 5'-phosphate-binding site is contributed by 115-118 (GEFG). Residues 195–199 (CCCFC) carry the CCCFC; essential for catalytic activity, may be the site of iron coordination motif.

The protein belongs to the NMT1/THI5 family. Homodimer. The cofactor is Fe cation.

It catalyses the reaction N(6)-(pyridoxal phosphate)-L-lysyl-[4-amino-5-hydroxymethyl-2-methylpyrimidine phosphate synthase] + L-histidyl-[4-amino-5-hydroxymethyl-2-methylpyrimidine phosphate synthase] + 2 Fe(3+) + 4 H2O = L-lysyl-[4-amino-5-hydroxymethyl-2-methylpyrimidine phosphate synthase] + (2S)-2-amino-5-hydroxy-4-oxopentanoyl-[4-amino-5-hydroxymethyl-2-methylpyrimidine phosphate synthase] + 4-amino-2-methyl-5-(phosphooxymethyl)pyrimidine + 3-oxopropanoate + 2 Fe(2+) + 2 H(+). It participates in cofactor biosynthesis; thiamine diphosphate biosynthesis. In terms of biological role, responsible for the formation of the pyrimidine heterocycle in the thiamine biosynthesis pathway. Catalyzes the formation of hydroxymethylpyrimidine phosphate (HMP-P) from histidine and pyridoxal phosphate (PLP). The protein uses PLP and the active site histidine to form HMP-P, generating an inactive enzyme. The enzyme can only undergo a single turnover, which suggests it is a suicide enzyme. This Saccharomyces cerevisiae (strain ATCC 204508 / S288c) (Baker's yeast) protein is 4-amino-5-hydroxymethyl-2-methylpyrimidine phosphate synthase THI13.